The primary structure comprises 205 residues: Putative 3-methyladenine DNA glycosylase (205 aa).

The protein belongs to the DNA glycosylase MPG family.

In Clostridium acetobutylicum (strain ATCC 824 / DSM 792 / JCM 1419 / IAM 19013 / LMG 5710 / NBRC 13948 / NRRL B-527 / VKM B-1787 / 2291 / W), this protein is Putative 3-methyladenine DNA glycosylase.